Consider the following 156-residue polypeptide: Small ribosomal subunit protein uS7 (156 aa).

It belongs to the universal ribosomal protein uS7 family. In terms of assembly, part of the 30S ribosomal subunit. Contacts proteins S9 and S11.

Its function is as follows. One of the primary rRNA binding proteins, it binds directly to 16S rRNA where it nucleates assembly of the head domain of the 30S subunit. Is located at the subunit interface close to the decoding center, probably blocks exit of the E-site tRNA. The chain is Small ribosomal subunit protein uS7 from Cellvibrio japonicus (strain Ueda107) (Pseudomonas fluorescens subsp. cellulosa).